A 427-amino-acid chain; its full sequence is Glutamyl-tRNA reductase (427 aa).

Substrate contacts are provided by residues 50–53, serine 110, 115–117, and glutamine 121; these read TCNR and ETQ. The active-site Nucleophile is the cysteine 51. 190 to 195 serves as a coordination point for NADP(+); it reads GAGEMG.

Belongs to the glutamyl-tRNA reductase family. Homodimer.

The catalysed reaction is (S)-4-amino-5-oxopentanoate + tRNA(Glu) + NADP(+) = L-glutamyl-tRNA(Glu) + NADPH + H(+). It functions in the pathway porphyrin-containing compound metabolism; protoporphyrin-IX biosynthesis; 5-aminolevulinate from L-glutamyl-tRNA(Glu): step 1/2. Functionally, catalyzes the NADPH-dependent reduction of glutamyl-tRNA(Glu) to glutamate 1-semialdehyde (GSA). The protein is Glutamyl-tRNA reductase of Campylobacter concisus (strain 13826).